A 285-amino-acid chain; its full sequence is Urease accessory protein UreD (285 aa).

This sequence belongs to the UreD family. UreD, UreF and UreG form a complex that acts as a GTP-hydrolysis-dependent molecular chaperone, activating the urease apoprotein by helping to assemble the nickel containing metallocenter of UreC. The UreE protein probably delivers the nickel.

It localises to the cytoplasm. In terms of biological role, required for maturation of urease via the functional incorporation of the urease nickel metallocenter. The sequence is that of Urease accessory protein UreD from Azoarcus sp. (strain BH72).